Consider the following 183-residue polypeptide: Putative calmodulin-like protein 2 (183 aa).

4 consecutive EF-hand domains span residues 7–42 (EQIA…LGQS), 43–78 (PTEA…KLRD), 80–115 (GAED…LGDP), and 116–151 (LSDD…KRRQ). The Ca(2+) site is built by D20, D22, D24, T26, E31, D56, D58, S60, S62, E67, D93, D95, N97, E104, D129, D131, D133, Q135, and E140. Residues 154–183 (MEGHGSGGHRSSNSHKKSGCCGPNSSCTIL) form a disordered region. S-palmitoyl cysteine attachment occurs at residues C173 and C174. A Cysteine methyl ester modification is found at C180. C180 carries S-farnesyl cysteine lipidation. Positions 181–183 (TIL) are cleaved as a propeptide — removed in mature form.

The protein belongs to the calmodulin family.

It localises to the membrane. Functionally, potential calcium sensor. This Oryza sativa subsp. japonica (Rice) protein is Putative calmodulin-like protein 2 (CML2).